The primary structure comprises 257 residues: Gamma-secretase subunit APH-1B (257 aa).

Transmembrane regions (helical) follow at residues 5-25 (VFFGCAFIAFGPALALYVFTI), 32-52 (IIFLIAGAFFWLVSLLISSLV), 71-91 (LLIFGAFVSVYIQEMFRFAYY), 115-135 (LLAYVSGLGFGIMSGVFSFVN), 158-178 (YSAFMTLVIILLHVFWGIVFF), 186-206 (WGILLIVLLTHLLVSAQTFIS), and 213-233 (LASAFIILVLMGTWAFLAAGG).

It belongs to the APH-1 family. Probable component of the gamma-secretase complex, a complex composed of a presenilin homodimer (PSEN1 or PSEN2), nicastrin (NCSTN), APH1 (APH1A or APH1B) and PEN2. Such minimal complex is sufficient for secretase activity, although other components may exist. Interacts with PSEN1 and PSEN2. As to expression, weakly or not expressed in leukocytes, lung, placenta, small intestine, liver, kidney, spleen thymus, colon, skeletal muscle, heart and brain.

It localises to the membrane. Probable subunit of the gamma-secretase complex, an endoprotease complex that catalyzes the intramembrane cleavage of integral proteins such as Notch receptors and APP (amyloid-beta precursor protein). It probably represents a stabilizing cofactor for the presenilin homodimer that promotes the formation of a stable complex. Probably present in a minority of gamma-secretase complexes compared to APH1A. The chain is Gamma-secretase subunit APH-1B (APH1B) from Homo sapiens (Human).